The chain runs to 85 residues: UPF0291 protein SGO_0570 (85 aa).

The tract at residues 56–85 (EDGNDVTPEKLRQVQREKGLHGRSLDDPNS) is disordered. Basic and acidic residues predominate over residues 62 to 85 (TPEKLRQVQREKGLHGRSLDDPNS).

The protein belongs to the UPF0291 family.

The protein resides in the cytoplasm. The polypeptide is UPF0291 protein SGO_0570 (Streptococcus gordonii (strain Challis / ATCC 35105 / BCRC 15272 / CH1 / DL1 / V288)).